We begin with the raw amino-acid sequence, 269 residues long: MKSVLLTRNIQENNETIQEINKYNLDLRYIHCSLIKYKTLDFNINILNNYSNIIITSKYAAHILADYNLKQDIWVVGNKTKQLLGKKVIYTANNIADLIQHFPTDLYKHTIYLSSNEITQDLPNKIARHIIYNVEYLNELPISIIQEFENIRYFSKPAYRNAFKANTIRATTAYKKVFNDPSLGSTYPLEVPLGKMSIDFILLYSQNSAKTLVRLLLQNNLLQYLQDSLVIAISLKVANIVRPFIKNVVYCDNQSPHDIIKLLYENAKI.

Residues 152-197 (RYFSKPAYRNAFKANTIRATTAYKKVFNDPSLGSTYPLEVPLGKMS) enclose the RPE1 insert domain.

This is an uncharacterized protein from Rickettsia prowazekii (strain Madrid E).